The primary structure comprises 799 residues: Phosphate transporter PHO1-1 (799 aa).

The Cytoplasmic portion of the chain corresponds to 1–406; it reads MVKFSKQFEG…TQRKESHTVT (406 aa). Residues 2–354 form the SPX domain; sequence VKFSKQFEGQ…GKQVLSVYLR (353 aa). Residues 170–243 are disordered; that stretch reads SLSGHHRAAA…GSLSRQSLGR (74 aa). The segment covering 180-193 has biased composition (low complexity); the sequence is GDDPSISSSSATSG. Residues 210-222 are compositionally biased toward basic and acidic residues; it reads ESQHETAVMRDPE. Positions 234-243 are enriched in polar residues; that stretch reads GSLSRQSLGR. The chain crosses the membrane as a helical span at residues 407 to 427; sequence FFIGLMTGCFVALFLGYCIMA. Residues 428-447 lie on the Extracellular side of the membrane; that stretch reads HIAGMYTQRRDSIYMETVYP. The chain crosses the membrane as a helical span at residues 448 to 468; sequence VFSMFSLMFLHLFMYGCNMVA. Residues 469-492 lie on the Cytoplasmic side of the membrane; that stretch reads WRKARINYSFIFEFAAGRELKYRD. The chain crosses the membrane as a helical span at residues 493 to 513; that stretch reads VFLVCTASMAVIVGVMFAHLS. The Extracellular segment spans residues 514-522; it reads LAVRGFHAQ. Residues 523 to 543 traverse the membrane as a helical segment; it reads AIPGFLLLGFLLLLFCPFNMV. The Cytoplasmic portion of the chain corresponds to 544 to 672; it reads YRSTRFQFLR…AYEKDRSLGS (129 aa). The EXS domain occupies 608–799; that stretch reads INTKHIRDLA…LPFHEADEED (192 aa). The chain crosses the membrane as a helical span at residues 673 to 693; sequence LSLLVIVSSSATMYQLYWDFV. At 694 to 718 the chain is on the extracellular side; it reads KDWGLLQPNSKNPWLRNDLILKSKS. The helical transmembrane segment at 719–739 threads the bilayer; that stretch reads IYYLSMGLNLVLRLAWLQTVI. The Cytoplasmic portion of the chain corresponds to 740–799; that stretch reads HPNFGSLDSRVTSFFLAALEVIRRGHWNFYRLENEHLNNAGKFRAVKTVPLPFHEADEED.

This sequence belongs to the SYG1 (TC 2.A.94) family. As to expression, expressed in roots and flowers.

The protein resides in the cell membrane. In terms of biological role, may transport inorganic phosphate (Pi). The polypeptide is Phosphate transporter PHO1-1 (PHO1-1) (Oryza sativa subsp. japonica (Rice)).